We begin with the raw amino-acid sequence, 227 residues long: uncharacterized protein (227 aa).

The first 25 residues, Met-1 to Ala-25, serve as a signal peptide directing secretion.

To R.conorii RC1281.

This is an uncharacterized protein from Rickettsia conorii (strain ATCC VR-613 / Malish 7).